A 151-amino-acid chain; its full sequence is MILRAVVQRVSRARVTVGGEVVGQIGPGYVVLLGVSREDDEAAADYLAEKVAGLRVFEDEEGKMNRSIQEAGGAVLAVSQFTLYGDVRRGRRPGFDRAARPEQAEPLYRRFVERLRALGLHVETGRFQTHMEVELVNDGPVTILIDSEKTF.

The short motif at 139–140 is the Gly-cisPro motif, important for rejection of L-amino acids element; that stretch reads GP.

This sequence belongs to the DTD family. Homodimer.

The protein resides in the cytoplasm. It catalyses the reaction glycyl-tRNA(Ala) + H2O = tRNA(Ala) + glycine + H(+). The catalysed reaction is a D-aminoacyl-tRNA + H2O = a tRNA + a D-alpha-amino acid + H(+). An aminoacyl-tRNA editing enzyme that deacylates mischarged D-aminoacyl-tRNAs. Also deacylates mischarged glycyl-tRNA(Ala), protecting cells against glycine mischarging by AlaRS. Acts via tRNA-based rather than protein-based catalysis; rejects L-amino acids rather than detecting D-amino acids in the active site. By recycling D-aminoacyl-tRNA to D-amino acids and free tRNA molecules, this enzyme counteracts the toxicity associated with the formation of D-aminoacyl-tRNA entities in vivo and helps enforce protein L-homochirality. In Symbiobacterium thermophilum (strain DSM 24528 / JCM 14929 / IAM 14863 / T), this protein is D-aminoacyl-tRNA deacylase.